The following is a 720-amino-acid chain: Polyribonucleotide nucleotidyltransferase (720 aa).

Positions 485 and 491 each coordinate Mg(2+). One can recognise a KH domain in the interval 552–615 (PRIHTIKINP…EAIRRIQALT (64 aa)). The S1 motif domain maps to 621-689 (GRIYEGKVTR…RQGRIRLSIK (69 aa)). Residues 697 to 720 (PAAESVAESAPAQEAVVEQVPMTE) form a disordered region. Over residues 698–720 (AAESVAESAPAQEAVVEQVPMTE) the composition is skewed to low complexity.

Belongs to the polyribonucleotide nucleotidyltransferase family. Component of the RNA degradosome, which is a multiprotein complex involved in RNA processing and mRNA degradation. Requires Mg(2+) as cofactor.

The protein resides in the cytoplasm. The catalysed reaction is RNA(n+1) + phosphate = RNA(n) + a ribonucleoside 5'-diphosphate. In terms of biological role, involved in mRNA degradation. Catalyzes the phosphorolysis of single-stranded polyribonucleotides processively in the 3'- to 5'-direction. In Tolumonas auensis (strain DSM 9187 / NBRC 110442 / TA 4), this protein is Polyribonucleotide nucleotidyltransferase.